Consider the following 100-residue polypeptide: Competence protein ComGE (100 aa).

Residues 15 to 35 (VILLEAVVALAIFASIATLLL) form a helical membrane-spanning segment.

In terms of assembly, the transformation pili are flexible filaments, consisting mainly of the major pilin ComGC and smaller amounts of the minor pilins, including at least ComGD, ComGF and ComGG, and perhaps ComGE. Interacts with ComGD. Interacts with ComGF. Interacts with ComGG.

The protein localises to the cell membrane. Its subcellular location is the cell surface. Required for formation of the type IV-like pilus (T4P) that plays a role in transformation. Transformation pili are dynamically extended and retracted, perhaps thereby promoting DNA uptake and transformation. Involved in transformation. Required for DNA binding. The protein is Competence protein ComGE of Streptococcus pneumoniae (strain ATCC BAA-255 / R6).